The sequence spans 64 residues: Insect toxin OsI1 (64 aa).

Positions 1 to 61 constitute an LCN-type CS-alpha/beta domain; sequence DGYPKQKDGC…MWKYETNTCG (61 aa). 4 disulfides stabilise this stretch: Cys-10–Cys-60, Cys-14–Cys-35, Cys-21–Cys-42, and Cys-25–Cys-44. Gly-61 bears the Glycine amide mark.

It belongs to the long (4 C-C) scorpion toxin superfamily. Sodium channel inhibitor family. Beta subfamily. Expressed by the venom gland.

Its subcellular location is the secreted. Its function is as follows. Depressant insect beta-toxins cause a transient contraction paralysis followed by a slow flaccid paralysis. They bind voltage-independently at site-4 of sodium channels (Nav) and shift the voltage of activation toward more negative potentials thereby affecting sodium channel activation and promoting spontaneous and repetitive firing. This toxin is active only on insects. This chain is Insect toxin OsI1, found in Orthochirus scrobiculosus (Central Asian scorpion).